Here is a 262-residue protein sequence, read N- to C-terminus: Ribose-5-phosphate isomerase A (262 aa).

Residues 33–36 (TGST), 89–92 (DGAD), and 102–105 (KGGG) contribute to the substrate site. Glu-111 serves as the catalytic Proton acceptor. Lys-129 is a substrate binding site.

This sequence belongs to the ribose 5-phosphate isomerase family. Homodimer.

It carries out the reaction aldehydo-D-ribose 5-phosphate = D-ribulose 5-phosphate. The protein operates within carbohydrate degradation; pentose phosphate pathway; D-ribose 5-phosphate from D-ribulose 5-phosphate (non-oxidative stage): step 1/1. Catalyzes the reversible conversion of ribose-5-phosphate to ribulose 5-phosphate. The polypeptide is Ribose-5-phosphate isomerase A (Roseobacter denitrificans (strain ATCC 33942 / OCh 114) (Erythrobacter sp. (strain OCh 114))).